Reading from the N-terminus, the 376-residue chain is Transmembrane protein 183A (376 aa).

2 disordered regions span residues 1–20 (MARGPGPLGRPRPDTVAMPK) and 100–127 (MDAQEESIHERTVSRKKKSKRHKEELDG). The helical transmembrane segment at 300–320 (LNFIFIPIVMGMIFTLFTINV) threads the bilayer.

It belongs to the TMEM183 family.

It is found in the membrane. The chain is Transmembrane protein 183A (TMEM183A) from Homo sapiens (Human).